The chain runs to 1229 residues: Nuclear envelope pore membrane protein POM 121C (1229 aa).

Low complexity predominate over residues 1 to 10 (MSPAAAAAGA). Residues 1 to 24 (MSPAAAAAGAGERRRPIASVRDGR) form a disordered region. Positions 1–40 (MSPAAAAAGAGERRRPIASVRDGRGRGCGGPAGAALLGLS) are cisternal side. Positions 1–398 (MSPAAAAAGA…AITSSYSSTR (398 aa)) are required for targeting to the nucleus and nuclear pore complex. Over residues 11–24 (GERRRPIASVRDGR) the composition is skewed to basic and acidic residues. The helical transmembrane segment at 41–61 (LVGLLLYLVPAAAALAWLAVG) threads the bilayer. Residues 62–1229 (TTAAWWGLSR…QARRQHTRKK (1168 aa)) are pore side. Phosphoserine is present on Ser81. Disordered stretches follow at residues 90–200 (RTLF…LPDR), 296–507 (KKKK…LGYS), 579–747 (KKMQ…TAPT), 936–966 (PLPS…ALTP), and 1202–1229 (PSFS…TRKK). The span at 155–166 (ARPAPRSTPPSQ) shows a compositional bias: pro residues. Low complexity predominate over residues 176–189 (PSLPTPLLRPSGRP). Ser322, Ser328, Ser348, Ser370, and Ser373 each carry phosphoserine. Over residues 374–400 (LTGAYTSGIPSSSRNAITSSYSSTRGI) the composition is skewed to polar residues. The segment covering 409-422 (PSSSPFSSPASSRS) has biased composition (low complexity). 2 stretches are compositionally biased toward basic and acidic residues: residues 427 to 439 (RPAK…ELCH) and 449 to 463 (ADKE…DTTP). Residues 468–479 (NSNSQSTPGSSG) are compositionally biased toward polar residues. A compositionally biased stretch (low complexity) spans 612–629 (PPLGLSQSGPPGLLPSPS). The segment covering 660-673 (QAETATKPQATSAP) has biased composition (polar residues). Low complexity-rich tracts occupy residues 689-703 (SPSS…SASP) and 726-747 (SVSA…TAPT). Over residues 1219 to 1229 (LQARRQHTRKK) the composition is skewed to basic residues.

This sequence belongs to the POM121 family.

The protein localises to the nucleus. Its subcellular location is the nuclear pore complex. It is found in the nucleus membrane. It localises to the endoplasmic reticulum membrane. Its function is as follows. Essential component of the nuclear pore complex (NPC). The repeat-containing domain may be involved in anchoring components of the pore complex to the pore membrane. When overexpressed in cells induces the formation of cytoplasmic annulate lamellae (AL). The protein is Nuclear envelope pore membrane protein POM 121C (POM121C) of Homo sapiens (Human).